The sequence spans 294 residues: Undecaprenyl-diphosphatase (294 aa).

Transmembrane regions (helical) follow at residues 2 to 22 (SMIY…SLIL), 27 to 47 (LVFS…PISS), 65 to 85 (VIAF…KIFW), 110 to 130 (LCIR…MIFY), 135 to 155 (LIFE…FLLV), 172 to 192 (ITYL…WPGF), 215 to 235 (FSFF…LYHY), 239 to 259 (IGLM…FIAL), and 272 to 292 (VSLI…YWGL).

It belongs to the UppP family.

The protein localises to the cell inner membrane. The enzyme catalyses di-trans,octa-cis-undecaprenyl diphosphate + H2O = di-trans,octa-cis-undecaprenyl phosphate + phosphate + H(+). Functionally, catalyzes the dephosphorylation of undecaprenyl diphosphate (UPP). Confers resistance to bacitracin. In Blochmanniella pennsylvanica (strain BPEN), this protein is Undecaprenyl-diphosphatase.